The primary structure comprises 360 residues: 3-dehydroquinate synthase (360 aa).

Residues 70–75 (DGEKYK), 104–108 (GVIGD), 128–129 (TT), K141, and K150 contribute to the NAD(+) site. Residues E183, H246, and H263 each coordinate Zn(2+).

Belongs to the sugar phosphate cyclases superfamily. Dehydroquinate synthase family. Requires Co(2+) as cofactor. Zn(2+) is required as a cofactor. The cofactor is NAD(+).

The protein resides in the cytoplasm. It carries out the reaction 7-phospho-2-dehydro-3-deoxy-D-arabino-heptonate = 3-dehydroquinate + phosphate. It functions in the pathway metabolic intermediate biosynthesis; chorismate biosynthesis; chorismate from D-erythrose 4-phosphate and phosphoenolpyruvate: step 2/7. Functionally, catalyzes the conversion of 3-deoxy-D-arabino-heptulosonate 7-phosphate (DAHP) to dehydroquinate (DHQ). The polypeptide is 3-dehydroquinate synthase (Acinetobacter baumannii (strain AYE)).